A 269-amino-acid chain; its full sequence is Energy-coupling factor transporter ATP-binding protein EcfA1 (269 aa).

The region spanning 8 to 242 is the ABC transporter domain; sequence IEFKDVSFQY…EEALISVGLD (235 aa). Residue 42 to 49 participates in ATP binding; that stretch reads GHNGSGKS.

Belongs to the ABC transporter superfamily. Energy-coupling factor EcfA family. As to quaternary structure, forms a stable energy-coupling factor (ECF) transporter complex composed of 2 membrane-embedded substrate-binding proteins (S component), 2 ATP-binding proteins (A component) and 2 transmembrane proteins (T component).

Its subcellular location is the cell membrane. In terms of biological role, ATP-binding (A) component of a common energy-coupling factor (ECF) ABC-transporter complex. Unlike classic ABC transporters this ECF transporter provides the energy necessary to transport a number of different substrates. The protein is Energy-coupling factor transporter ATP-binding protein EcfA1 of Staphylococcus epidermidis (strain ATCC 35984 / DSM 28319 / BCRC 17069 / CCUG 31568 / BM 3577 / RP62A).